A 265-amino-acid polypeptide reads, in one-letter code: 3-methyl-2-oxobutanoate hydroxymethyltransferase (265 aa).

Mg(2+) contacts are provided by D46 and D85. 3-methyl-2-oxobutanoate is bound by residues 46–47 (DS), D85, and K114. Residue E116 coordinates Mg(2+). E183 acts as the Proton acceptor in catalysis.

Belongs to the PanB family. In terms of assembly, homodecamer; pentamer of dimers. The cofactor is Mg(2+).

Its subcellular location is the cytoplasm. The catalysed reaction is 3-methyl-2-oxobutanoate + (6R)-5,10-methylene-5,6,7,8-tetrahydrofolate + H2O = 2-dehydropantoate + (6S)-5,6,7,8-tetrahydrofolate. The protein operates within cofactor biosynthesis; coenzyme A biosynthesis. Its function is as follows. Catalyzes the reversible reaction in which hydroxymethyl group from 5,10-methylenetetrahydrofolate is transferred onto alpha-ketoisovalerate to form ketopantoate. This chain is 3-methyl-2-oxobutanoate hydroxymethyltransferase, found in Caldivirga maquilingensis (strain ATCC 700844 / DSM 13496 / JCM 10307 / IC-167).